Reading from the N-terminus, the 109-residue chain is Putative membrane protein insertion efficiency factor (109 aa).

Belongs to the UPF0161 family.

Its subcellular location is the cell inner membrane. In terms of biological role, could be involved in insertion of integral membrane proteins into the membrane. The protein is Putative membrane protein insertion efficiency factor of Rhodopseudomonas palustris (strain BisB18).